We begin with the raw amino-acid sequence, 1224 residues long: DNA-directed RNA polymerase subunit beta'' (1224 aa).

Zn(2+) is bound by residues Cys223, Cys297, Cys304, and Cys307.

The protein belongs to the RNA polymerase beta' chain family. RpoC2 subfamily. In terms of assembly, in plastids the minimal PEP RNA polymerase catalytic core is composed of four subunits: alpha, beta, beta', and beta''. When a (nuclear-encoded) sigma factor is associated with the core the holoenzyme is formed, which can initiate transcription. Zn(2+) serves as cofactor.

The protein localises to the plastid. It localises to the chloroplast. The catalysed reaction is RNA(n) + a ribonucleoside 5'-triphosphate = RNA(n+1) + diphosphate. Its function is as follows. DNA-dependent RNA polymerase catalyzes the transcription of DNA into RNA using the four ribonucleoside triphosphates as substrates. The sequence is that of DNA-directed RNA polymerase subunit beta'' from Porphyra purpurea (Red seaweed).